A 147-amino-acid polypeptide reads, in one-letter code: MEKQVIQSVGFRNIKNGNGEITGFQFKVKLPYYRGVFLSQIRPGTLFVDGQKIEKDQITWTINGEEYTNQEMRGDFKTHWATTKPAVLKVKMPGGLAQGYHDLKYGFCFTSSYMPPIIQDGLDPDKESMVYMPEFGHHVNERRLLIV.

The protein belongs to the C-glycoside deglycosidase beta subunit family. In terms of assembly, heterooctamer composed of four alpha subunits (DfgA) and four beta subunits (DfgB). Requires Mn(2+) as cofactor.

The enzyme catalyses 3''-dehydroisoorientin = 1,5-anhydro-D-erythro-hex-1-en-3-ulose + luteolin. It catalyses the reaction 3''-dehydroisovitexin = 1,5-anhydro-D-erythro-hex-1-en-3-ulose + apigenin. Activity is strongly reduced in the presence of chelating agents. Its function is as follows. Carbon-carbon bond-cleaving enzyme which participates in the metabolism of C-glycosides. Acts on the C6-glycosylated compounds 3''-dehydroisoorientin (3''-oxo-homoorientin) and 3''-dehydroisovitexin (3''-oxo-isovitexin). The protein is C-glycoside deglycosidase beta subunit of Eubacterium cellulosolvens (strain ATCC 43171 / JCM 9499 / 6) (Cillobacterium cellulosolvens).